Reading from the N-terminus, the 591-residue chain is Isocitrate dehydrogenase kinase/phosphatase (591 aa).

ATP contacts are provided by residues 315–321 (APGVKGM) and Lys-336. Residue Asp-371 is part of the active site.

The protein belongs to the AceK family.

The protein localises to the cytoplasm. It carries out the reaction L-seryl-[isocitrate dehydrogenase] + ATP = O-phospho-L-seryl-[isocitrate dehydrogenase] + ADP + H(+). Functionally, bifunctional enzyme which can phosphorylate or dephosphorylate isocitrate dehydrogenase (IDH) on a specific serine residue. This is a regulatory mechanism which enables bacteria to bypass the Krebs cycle via the glyoxylate shunt in response to the source of carbon. When bacteria are grown on glucose, IDH is fully active and unphosphorylated, but when grown on acetate or ethanol, the activity of IDH declines drastically concomitant with its phosphorylation. This chain is Isocitrate dehydrogenase kinase/phosphatase, found in Pectobacterium atrosepticum (strain SCRI 1043 / ATCC BAA-672) (Erwinia carotovora subsp. atroseptica).